Reading from the N-terminus, the 237-residue chain is Proteasome subunit alpha type-5 (237 aa).

The protein belongs to the peptidase T1A family. As to quaternary structure, the 26S proteasome consists of a 20S proteasome core and two 19S regulatory subunits. The 20S proteasome core is composed of 28 subunits that are arranged in four stacked rings, resulting in a barrel-shaped structure. The two end rings are each formed by seven alpha subunits, and the two central rings are each formed by seven beta subunits. The catalytic chamber with the active sites is on the inside of the barrel.

The protein localises to the cytoplasm. Its subcellular location is the nucleus. In terms of biological role, the proteasome is a multicatalytic proteinase complex which is characterized by its ability to cleave peptides with Arg, Phe, Tyr, Leu, and Glu adjacent to the leaving group at neutral or slightly basic pH. The proteasome has an ATP-dependent proteolytic activity. The polypeptide is Proteasome subunit alpha type-5 (PAE1) (Oryza sativa subsp. japonica (Rice)).